We begin with the raw amino-acid sequence, 794 residues long: uncharacterized protein (794 aa).

Transmembrane regions (helical) follow at residues 34 to 54 (FSAS…VFAV), 67 to 87 (ITAA…AHLI), 99 to 119 (MLAD…AFAS), 132 to 152 (LFLF…ADVT), 257 to 277 (VGPS…AMGL), 283 to 303 (LAWI…MFQL), 315 to 335 (WSVN…VLVF), 353 to 373 (LGAL…ATLF), and 421 to 441 (WTGT…LMGV).

Its subcellular location is the cell membrane. This is an uncharacterized protein from Corynebacterium glutamicum (strain ATCC 13032 / DSM 20300 / JCM 1318 / BCRC 11384 / CCUG 27702 / LMG 3730 / NBRC 12168 / NCIMB 10025 / NRRL B-2784 / 534).